The chain runs to 379 residues: Beta-1,3-N-acetylglucosaminyltransferase lunatic fringe (379 aa).

The Cytoplasmic segment spans residues 1–8 (MLKRCGRR). A helical; Signal-anchor for type II membrane protein membrane pass occupies residues 9–29 (LLLALAGALLACLLVLTADPP). The Lumenal segment spans residues 30–379 (PPPLPAERGR…TPWCPRTAIF (350 aa)). A disordered region spans residues 86–107 (RDAGPPPGAAPRPADGHPRPLA). Arginine 129 contributes to the substrate binding site. Residue asparagine 167 is glycosylated (N-linked (GlcNAc...) asparagine). 2 cysteine pairs are disulfide-bonded: cysteine 168–cysteine 179 and cysteine 197–cysteine 260. Aspartate 201 is a binding site for substrate. Position 202 (aspartate 202) interacts with Mn(2+). The active site involves aspartate 290. A Mn(2+)-binding site is contributed by histidine 314. Cysteines 364 and 373 form a disulfide.

This sequence belongs to the glycosyltransferase 31 family. It depends on Mn(2+) as a cofactor. The cofactor is Co(2+). Post-translationally, a soluble form may be derived from the membrane form by proteolytic processing.

The protein resides in the golgi apparatus. It is found in the golgi apparatus membrane. It catalyses the reaction 3-O-(alpha-L-fucosyl)-L-threonyl-[EGF-like domain protein] + UDP-N-acetyl-alpha-D-glucosamine = 3-O-(N-acetyl-beta-D-glucosaminyl-(1-&gt;3)-alpha-L-fucosyl)-L-threonyl-[EGF-like domain protein] + UDP + H(+). The catalysed reaction is 3-O-(alpha-L-fucosyl)-L-seryl-[EGF-like domain protein] + UDP-N-acetyl-alpha-D-glucosamine = 3-O-(N-acetyl-beta-D-glucosaminyl-(1-&gt;3)-alpha-L-fucosyl)-L-seryl-[EGF-like domain protein] + UDP + H(+). Functionally, glycosyltransferase that initiates the elongation of O-linked fucose residues attached to EGF-like repeats in the extracellular domain of Notch molecules. Modulates NOTCH1 activity by modifying O-fucose residues at specific EGF-like domains resulting in inhibition of NOTCH1 activation by JAG1 and enhancement of NOTCH1 activation by DLL1 via an increase in its binding to DLL1. Decreases the binding of JAG1 to NOTCH2 but not that of DLL1. Essential mediator of somite segmentation and patterning. In Homo sapiens (Human), this protein is Beta-1,3-N-acetylglucosaminyltransferase lunatic fringe.